The sequence spans 24 residues: Cupiennin-5a (24 aa).

Expressed by the venom gland.

The protein localises to the secreted. The chain is Cupiennin-5a from Cupiennius salei (American wandering spider).